The chain runs to 447 residues: Probable aspartic protease At2g35615 (447 aa).

An N-terminal signal peptide occupies residues 1-20; that stretch reads MATQILLCFFLFFSVTLSSS. N-linked (GlcNAc...) asparagine glycosylation occurs at asparagine 25. Residues 85–439 enclose the Peptidase A1 domain; it reads FFMSITIGTP…DLETRTVSFQ (355 aa). Aspartate 103 is a catalytic residue. An N-linked (GlcNAc...) asparagine glycan is attached at asparagine 251. Residue aspartate 326 is part of the active site.

This sequence belongs to the peptidase A1 family.

It is found in the secreted. The sequence is that of Probable aspartic protease At2g35615 from Arabidopsis thaliana (Mouse-ear cress).